Consider the following 289-residue polypeptide: Doxorubicin resistance ABC transporter permease protein DrrB (289 aa).

The 236-residue stretch at 47–282 (GEVLTTVGAP…FVVILALSST (236 aa)) folds into the ABC transmembrane type-2 domain. The next 6 helical transmembrane spans lie at 49–69 (VLTT…PFAI), 88–108 (QYIT…GSGF), 138–158 (WVAV…GYVI), 166–186 (ALYI…LSFA), 199–219 (AMLP…IGLM), and 266–286 (TLTW…IVLA).

The protein belongs to the ABC-2 integral membrane protein family. As to quaternary structure, the complex is composed of two ATP-binding proteins (DrrA) and two transmembrane proteins (DrrB and DrrC).

It is found in the cell membrane. Its function is as follows. Part of the ABC transporter complex DrrABC involved in doxorubicin resistance. Probably responsible for the translocation of the substrate across the membrane. This is Doxorubicin resistance ABC transporter permease protein DrrB (drrB) from Mycobacterium tuberculosis (strain CDC 1551 / Oshkosh).